The sequence spans 204 residues: Abscisic acid receptor PYL3 (204 aa).

Residues 40 to 191 (HEPRDHQCSS…NLKSLAEVSE (152 aa)) form an START-like region. Cys47 and Cys172 form a disulfide bridge. Residues Lys76, 104–109 (ATRSTE), 131–137 (RLKNYSS), and Glu156 contribute to the abscisate site. The Gate loop motif lies at 100–104 (SGLPA). Residues 130 to 132 (HRL) carry the Latch loop motif.

Belongs to the PYR/PYL/RCAR abscisic acid intracellular receptor family. In terms of assembly, monomer. Interacts with PP2C50. Binding to PP2C50 is dependent on the presence of abscisic acid (ABA). Interacts with PP2C30 and PP2C53.

It localises to the cytoplasm. It is found in the cytosol. The protein resides in the nucleus. In terms of biological role, involved in abscisic acid (ABA) signaling during seed germination and abiotic stress response. Acts as a positive regulator of ABA-mediated inhibition of seed germination, and tolerance to drought and cold stresses. Together with PP2C50 and SAPK10, may form an ABA signaling module involved in stress response. Inhibits the protein phosphatases PP2C06 and PP2C09 when activated by abscisic acid (ABA). In Oryza sativa subsp. japonica (Rice), this protein is Abscisic acid receptor PYL3.